The sequence spans 119 residues: NADH-quinone oxidoreductase subunit 7 (119 aa).

A run of 3 helical transmembrane segments spans residues 11–31, 59–79, and 88–108; these read LIYV…GALL, VHFY…AFLW, and LGLY…VGFL.

It belongs to the complex I subunit 3 family. In terms of assembly, NDH-1 is composed of 15 different subunits, Nqo1 to Nqo15. The complex has a L-shaped structure, with the hydrophobic arm (subunits Nqo7, Nqo8 and Nqo10 to Nqo14) embedded in the membrane and the hydrophilic peripheral arm (subunits Nqo1 to Nqo6, Nqo9 and Nqo15) protruding into the bacterial cytoplasm. The hydrophilic domain contains all the redox centers.

Its subcellular location is the cell inner membrane. It carries out the reaction a quinone + NADH + 5 H(+)(in) = a quinol + NAD(+) + 4 H(+)(out). In terms of biological role, NDH-1 shuttles electrons from NADH, via FMN and iron-sulfur (Fe-S) centers, to quinones in the respiratory chain. The immediate electron acceptor for the enzyme in this species is menaquinone. Couples the redox reaction to proton translocation (for every two electrons transferred, four hydrogen ions are translocated across the cytoplasmic membrane), and thus conserves the redox energy in a proton gradient required for the synthesis of ATP. The protein is NADH-quinone oxidoreductase subunit 7 (nqo7) of Thermus thermophilus (strain ATCC 27634 / DSM 579 / HB8).